Reading from the N-terminus, the 126-residue chain is Protein ApaG (126 aa).

The ApaG domain occupies 2-126 (SDPRYQIDVS…FRLAVPGALH (125 aa)).

This Pseudomonas putida (strain W619) protein is Protein ApaG.